A 242-amino-acid chain; its full sequence is ATP-dependent dethiobiotin synthetase BioD (242 aa).

Glu-12–Val-17 contacts ATP. Position 16 (Thr-16) interacts with Mg(2+). Lys-37 is an active-site residue. Ser-41 provides a ligand contact to substrate. Residues Asp-51 and Glu-112–Gly-115 each bind ATP. 2 residues coordinate Mg(2+): Asp-51 and Glu-112.

This sequence belongs to the dethiobiotin synthetase family. As to quaternary structure, homodimer. Mg(2+) is required as a cofactor.

It is found in the cytoplasm. It catalyses the reaction (7R,8S)-7,8-diammoniononanoate + CO2 + ATP = (4R,5S)-dethiobiotin + ADP + phosphate + 3 H(+). It functions in the pathway cofactor biosynthesis; biotin biosynthesis; biotin from 7,8-diaminononanoate: step 1/2. Functionally, catalyzes a mechanistically unusual reaction, the ATP-dependent insertion of CO2 between the N7 and N8 nitrogen atoms of 7,8-diaminopelargonic acid (DAPA, also called 7,8-diammoniononanoate) to form a ureido ring. The protein is ATP-dependent dethiobiotin synthetase BioD of Bacillus cereus (strain AH820).